The sequence spans 366 residues: ABI gene family member 3 (366 aa).

Positions 33-61 form a coiled coil; that stretch reads CEDNYVQATDKRKALEETMAFTTQALASV. The interval 161–195 is disordered; sequence SRTGTLSRKSIKAPATPASATLGRPPRIPEPVHLP. Residues S213 and S216 each carry the phosphoserine modification. Positions 215–302 are disordered; it reads GSAEGVGGAP…PPPGFGPDEP (88 aa). The segment covering 232-248 has biased composition (pro residues); that stretch reads PPAPPLPSSLDPPPPPA. An SH3 domain is found at 308–366; that stretch reads SYLEKVVTLYPYTSQKDNELSFSEGTVICVTRRYSDGWCEGVSSEGTGFFPGNYVEPSC. S342 carries the post-translational modification Phosphoserine.

The protein belongs to the ABI family. As to quaternary structure, may interact with PAK1 and PAK2. Probably interacts with TARSH. Expressed in heart, lung, liver, pancreas, kidney, placenta and at low levels in brain and skeletal muscle.

It is found in the cytoplasm. Its function is as follows. May inhibit tumor metastasis. In vitro, reduces cell motility. In Homo sapiens (Human), this protein is ABI gene family member 3 (ABI3).